Consider the following 135-residue polypeptide: Large ribosomal subunit protein uL16c (135 aa).

The protein belongs to the universal ribosomal protein uL16 family. In terms of assembly, part of the 50S ribosomal subunit.

The protein localises to the plastid. Its subcellular location is the chloroplast. This Phaseolus vulgaris (Kidney bean) protein is Large ribosomal subunit protein uL16c.